A 520-amino-acid polypeptide reads, in one-letter code: MSLSPCRAQRGFSARSACSARSRGRSRGGFSSRGGFSSRSLNSFGGCLEGSRGSTWGSGGRLGVRFGEWSGGPGLSLCPPGGIQEVTINQNLLTPLKIEIDPQFQVVRTQETQEIRTLNNQFASFIDKVRFLEQQNKVLETKWHLLQQQGLSGSQQGLEPVFEACLDQLRKQLEQLQGERGALDAELKACRDQEEEYKSKYEEEAHRRATLENDFVVLKKDVDGVFLSKMELEGKLEALREYLYFLKHLNEEELGQLQTQASDTSVVLSMDNNRYLDFSSIITEVRARYEEIARSSKAEAEALYQTKYQELQVSAQLHGDRMQETKVQISQLHQEIQRLQSQTENLKKQNASLQAAITDAEQRGELALKDAQAKVDELEAALRMAKQNLARLLCEYQELTSTKLSLDVEIATYRRLLEGEECRMSGECTSQVTISSVGGSAVMSGGVGGGLGSTCGLGSGKGSPGSCCTSIVTGGSNIILGSGKDPVLDSCSVSGSSAGSSCHTILKKTVESSLKTSITY.

Residues 1–110 form a head region; it reads MSLSPCRAQR…DPQFQVVRTQ (110 aa). Residues 111-146 form a coil 1A region; the sequence is ETQEIRTLNNQFASFIDKVRFLEQQNKVLETKWHLL. Residues 111-424 enclose the IF rod domain; sequence ETQEIRTLNN…RLLEGEECRM (314 aa). The tract at residues 147-165 is linker 1; sequence QQQGLSGSQQGLEPVFEAC. Positions 166–258 are coil 1B; that stretch reads LDQLRKQLEQ…LNEEELGQLQ (93 aa). Residues 259 to 281 form a linker 12 region; sequence TQASDTSVVLSMDNNRYLDFSSI. The interval 282 to 421 is coil 2; the sequence is ITEVRARYEE…TYRRLLEGEE (140 aa). The segment at 422-520 is tail; sequence CRMSGECTSQ…ESSLKTSITY (99 aa).

It belongs to the intermediate filament family. In terms of assembly, heterotetramer of two type I and two type II keratins. In non-keratinising esophageal and vaginal epithelium, strongly expressed in the basal and parabasal/lower suprabasal cell layers with considerably decreased expression in the mid/upper suprabasal layers (at protein level). A similar gradient from basal to lower suprabasal layers is seen in the partially keratinised dorsal tongue epithelium, in the scalp and in the plantar epidermis (at protein level). Extension of expression into the suprabasal compartments is distinctly more pronounced in non-keratinising epithelia than in keratinising epithelia and epidermis (at protein level). In scalp sections, present in the interfollicular epidermis and infundibulum including the entire outer root sheath of the hair follicles and also in the sebocytes (at protein level). In sweat glands, expressed in peripheral and luminal cells of the lower duct and in peripheral cells of the middle/upper duct with no expression observed in luminal cells (at protein level). In embryos at the 14th week of pregnancy, detected in basal and parabasal layers but is absent from the uppermost epidermal layer (at protein level). Expressed in tongue epithelium.

In Homo sapiens (Human), this protein is Keratin, type II cytoskeletal 78 (KRT78).